The chain runs to 670 residues: Probable ATP-citrate synthase subunit 1 (670 aa).

A disordered region spans residues Met1–Gly22. ATP-binding positions include Leu257–Gly277 and Phe308–Ser334. Glu274 serves as a coordination point for Mg(2+). His316 serves as the catalytic Tele-phosphohistidine intermediate. CoA is bound at residue Met335–Thr345.

It belongs to the succinate/malate CoA ligase alpha subunit family. Composed of two subunits.

Its subcellular location is the cytoplasm. The catalysed reaction is oxaloacetate + acetyl-CoA + ADP + phosphate = citrate + ATP + CoA. In terms of biological role, catalyzes the formation of cytosolic acetyl-CoA, which is mainly used for the biosynthesis of fatty acids and sterols. In Neurospora crassa (strain ATCC 24698 / 74-OR23-1A / CBS 708.71 / DSM 1257 / FGSC 987), this protein is Probable ATP-citrate synthase subunit 1.